We begin with the raw amino-acid sequence, 1072 residues long: MNSMDRHIQQTNDRLQCIKQHLQNPANFHNAATELLDWCGDPRAFQRPFEQSLMGCLTVVSRVAAQQGFDLDLGYRLLAVCAANRDKFTPKSAALLSSWCEELGRLLLLRHQKSRQNDPPGKLPMQPPLSSMSSMKPTLSHSDGSFPYDSVPWQQNTNQPPGSLSVVTTVWGVTNTSQSQVLGNPMANANNPMNPGGNPMASGMSTSNPGINSPQFAGQQQQFSTKAGPAQPYIQPNMYGRPGYPGSGGFGASYPGGPSAPAGMGIPPHTRPPADFTQPAAAAAAAAVAAAAATATATATATVAALQETQNKDINQYGPVCSSFQMGPTQAYNSQFMNQPGPRGPASMGGSLNPAGMAAGMTPSGMSGPPMGMNQPRPPGISPFGTHGQRMPQQTYPGPRPQSLPIQSIKRPYPGEPNYGNQQYGPNSQFPTQPGQYPTPNPPRPLTSPNYPGQRMPSQPSTGQYPPPTVNMGQYYKPEQFNGQNNTFSSGSSYSSYSQGSVNRPPRPVPVANYPHSPVPGNPTPPMTPGSSIPPYLSPSQDVKPPFPPDIKPNMSALPPPPANHNDELRLTFPVRDGVVLEPFRLEHNLAVSNHVFHLRPTVHQTLMWRSDLELQFKCYHHEDRQMNTNWPASVQVSVNATPLTIERGDNKTSHKPLHLKHVCQPGRNTIQITVTACCCSHLFVLQLVHRPSVRSVLQGLLKKRLLPAEHCITKIKRNFSSVAASSGNTTLNGEDGVEQTAIKVSLKCPITFRRIQLPARGHDCKHVQCFDLESYLQLNCERGTWRCPVCNKTALLEGLEVDQYMWGILNAIQHSEFEEVTIDPTCSWRPVPIKSDLHIKDDPDGIPSKRFKTMSPSQMIMPNVMEMIAALGPGPSPYPLPPPPGGTSSNDYSSQGNNYQGHGNFDFPHGNPGGTSMNDFMHGPPQLSHPPDMPNNMAALEKPLSHPMQETMPHAGSSDQPHPSIQQGLHVPHPSSQAGPPLHHSGAPPPSQPPRQPPQAAPGNHPHSDLTFNPSSALEGQAGAQGASDMPEPSLDLLPELTNPDELLSYLDPPDLPSNSNDDLLSLFENN.

Residues 1 to 120 (MNSMDRHIQQ…HQKSRQNDPP (120 aa)) are sufficient for transactivation activity; sufficient for interaction with NOTCH1. Residue K91 forms a Glycyl lysine isopeptide (Lys-Gly) (interchain with G-Cter in SUMO2) linkage. 2 disordered regions span residues 112 to 141 (QKSR…TLSH) and 362 to 538 (TPSG…PYLS). Residues 128-141 (PLSSMSSMKPTLSH) are compositionally biased toward low complexity. Positions 419-436 (YGNQQYGPNSQFPTQPGQ) are enriched in polar residues. Residues 437–446 (YPTPNPPRPL) are compositionally biased toward pro residues. Residues 489-501 (SSGSSYSSYSQGS) are compositionally biased toward low complexity. Positions 517–528 (SPVPGNPTPPMT) are enriched in pro residues. The SP-RING-type zinc-finger motif lies at 734–815 (GEDGVEQTAI…MWGILNAIQH (82 aa)). C765, H767, C788, and C791 together coordinate Zn(2+). Glycyl lysine isopeptide (Lys-Gly) (interchain with G-Cter in SUMO2) cross-links involve residues K841 and K850. The tract at residues 844 to 1072 (PDGIPSKRFK…DDLLSLFENN (229 aa)) is transactivation domain. Pro residues predominate over residues 875–886 (GPSPYPLPPPPG). The interval 875–1072 (GPSPYPLPPP…DDLLSLFENN (198 aa)) is disordered. Composition is skewed to polar residues over residues 888 to 902 (TSSN…NYQG) and 958 to 968 (SSDQPHPSIQQ). Residues 988-1001 (APPPSQPPRQPPQA) are compositionally biased toward pro residues. Residues 1045 to 1072 (PDELLSYLDPPDLPSNSNDDLLSLFENN) show a composition bias toward low complexity.

In terms of assembly, interacts with AR, but not with ESR1, NR3C1, PGR, THRB nor VDR. Interacts with NOTCH1 and RBPJ. Interacts with SMARCA4. Interacts (via SP-RING-type domain) with SMAD3 and SMAD4 (via MH2 domain). Expressed in brain.

Its subcellular location is the nucleus. The protein resides in the nucleoplasm. The protein localises to the cytoplasm. In terms of biological role, acts as a transcriptional coactivator. Increases ligand-dependent transcriptional activity of AR and promotes AR sumoylation. The stimulation of AR activity is dependent upon sumoylation. Also functions as a transcriptional coactivator in the TGF-beta signaling pathway by increasing the activity of the SMAD3/SMAD4 transcriptional complex. Involved in transcriptional activation of a subset of NOTCH1 target genes including MYC. Involved in thymocyte and T cell development. Involved in the regulation of postmitotic positioning of pyramidal neurons in the developing cerebral cortex. This chain is Zinc finger MIZ domain-containing protein 1 (Zmiz1), found in Mus musculus (Mouse).